The chain runs to 245 residues: Probable proteasome subunit alpha type-2 (245 aa).

The protein belongs to the peptidase T1A family. As to quaternary structure, the 26S proteasome consists of a 20S proteasome core and two 19S regulatory subunits. The 20S proteasome core is composed of 28 subunits that are arranged in four stacked rings, resulting in a barrel-shaped structure. The two end rings are each formed by seven alpha subunits, and the two central rings are each formed by seven beta subunits. The catalytic chamber with the active sites is on the inside of the barrel.

It is found in the cytoplasm. It localises to the nucleus. In terms of biological role, the proteasome is a multicatalytic proteinase complex which is characterized by its ability to cleave peptides with Arg, Phe, Tyr, Leu, and Glu adjacent to the leaving group at neutral or slightly basic pH. The proteasome has an ATP-dependent proteolytic activity. This chain is Probable proteasome subunit alpha type-2 (pre8), found in Schizosaccharomyces pombe (strain 972 / ATCC 24843) (Fission yeast).